Consider the following 292-residue polypeptide: High-affinity heme uptake system protein IsdE (292 aa).

The N-terminal stretch at 1-19 (MRIIKYLTILVISVVILTS) is a signal peptide. A lipid anchor (N-palmitoyl cysteine) is attached at Cys-20. A lipid anchor (S-diacylglycerol cysteine) is attached at Cys-20. A Fe/B12 periplasmic-binding domain is found at 35 to 291 (RIVPTTVALT…QLYDLFYKDK (257 aa)). Residues Val-41, Ala-42, Ser-60, Tyr-61, Met-78, and His-229 each contribute to the heme site.

Belongs to the bacterial solute-binding protein 8 family. Requires heme b as cofactor.

Its subcellular location is the cell membrane. Its function is as follows. Involved in heme (porphyrin) scavenging. Binds Fe(2+) and Fe(3+) heme but the largest fraction is Fe(2+) heme. Functions as a high-affinity heme binding protein and probably has a role in relaying heme-iron from cell wall-anchored isd proteins receptors to the probable permease IsdF. The polypeptide is High-affinity heme uptake system protein IsdE (isdE) (Staphylococcus aureus (strain Mu3 / ATCC 700698)).